The primary structure comprises 119 residues: Large ribosomal subunit protein bL20 (119 aa).

This sequence belongs to the bacterial ribosomal protein bL20 family.

Its function is as follows. Binds directly to 23S ribosomal RNA and is necessary for the in vitro assembly process of the 50S ribosomal subunit. It is not involved in the protein synthesizing functions of that subunit. This Listeria innocua serovar 6a (strain ATCC BAA-680 / CLIP 11262) protein is Large ribosomal subunit protein bL20.